A 212-amino-acid polypeptide reads, in one-letter code: Thymidylate kinase (212 aa).

11 to 18 (GLEGAGKT) is an ATP binding site.

Belongs to the thymidylate kinase family.

It catalyses the reaction dTMP + ATP = dTDP + ADP. Phosphorylation of dTMP to form dTDP in both de novo and salvage pathways of dTTP synthesis. The chain is Thymidylate kinase (tmk) from Buchnera aphidicola subsp. Acyrthosiphon pisum (strain APS) (Acyrthosiphon pisum symbiotic bacterium).